Reading from the N-terminus, the 111-residue chain is T cell receptor beta variable 20-1 (111 aa).

Residues 1–15 form the signal peptide; sequence MLLLLLLLGPGSGLG. An Ig-like domain is found at 16 to 111; sequence AVVSQHPSRV…DSSFYICSAR (96 aa). An intrachain disulfide couples cysteine 37 to cysteine 108.

Alpha-beta TR is a heterodimer composed of an alpha and beta chain; disulfide-linked. The alpha-beta TR is associated with the transmembrane signaling CD3 coreceptor proteins to form the TR-CD3 (TcR or TCR). The assembly of alpha-beta TR heterodimers with CD3 occurs in the endoplasmic reticulum where a single alpha-beta TR heterodimer associates with one CD3D-CD3E heterodimer, one CD3G-CD3E heterodimer and one CD247 homodimer forming a stable octameric structure. CD3D-CD3E and CD3G-CD3E heterodimers preferentially associate with TR alpha and TR beta chains, respectively. The association of the CD247 homodimer is the last step of TcR assembly in the endoplasmic reticulum and is required for transport to the cell surface.

The protein resides in the cell membrane. V region of the variable domain of T cell receptor (TR) beta chain that participates in the antigen recognition. Alpha-beta T cell receptors are antigen specific receptors which are essential to the immune response and are present on the cell surface of T lymphocytes. Recognize peptide-major histocompatibility (MH) (pMH) complexes that are displayed by antigen presenting cells (APC), a prerequisite for efficient T cell adaptive immunity against pathogens. Binding of alpha-beta TR to pMH complex initiates TR-CD3 clustering on the cell surface and intracellular activation of LCK that phosphorylates the ITAM motifs of CD3G, CD3D, CD3E and CD247 enabling the recruitment of ZAP70. In turn ZAP70 phosphorylates LAT, which recruits numerous signaling molecules to form the LAT signalosome. The LAT signalosome propagates signal branching to three major signaling pathways, the calcium, the mitogen-activated protein kinase (MAPK) kinase and the nuclear factor NF-kappa-B (NF-kB) pathways, leading to the mobilization of transcription factors that are critical for gene expression and essential for T cell growth and differentiation. The T cell repertoire is generated in the thymus, by V-(D)-J rearrangement. This repertoire is then shaped by intrathymic selection events to generate a peripheral T cell pool of self-MH restricted, non-autoaggressive T cells. Post-thymic interaction of alpha-beta TR with the pMH complexes shapes TR structural and functional avidity. The protein is T cell receptor beta variable 20-1 of Homo sapiens (Human).